The primary structure comprises 1046 residues: DNA-directed RNA polymerase subunit beta' (1046 aa).

Residues D383, D385, and D387 each coordinate Mg(2+). The Zn(2+) site is built by C752, C826, C833, and C836.

Belongs to the RNA polymerase beta' chain family. As to quaternary structure, the RNAP catalytic core consists of 2 alpha, 1 beta, 1 beta' and 1 omega subunit. When a sigma factor is associated with the core the holoenzyme is formed, which can initiate transcription. The cofactor is Mg(2+). It depends on Zn(2+) as a cofactor.

It catalyses the reaction RNA(n) + a ribonucleoside 5'-triphosphate = RNA(n+1) + diphosphate. In terms of biological role, DNA-dependent RNA polymerase catalyzes the transcription of DNA into RNA using the four ribonucleoside triphosphates as substrates. In Weissella hellenica, this protein is DNA-directed RNA polymerase subunit beta'.